A 671-amino-acid polypeptide reads, in one-letter code: DNA ligase (671 aa).

NAD(+) is bound by residues 36–40 (DHVYD), 85–86 (SM), and E115. The N6-AMP-lysine intermediate role is filled by K117. The NAD(+) site is built by R138, E172, K287, and K311. Zn(2+)-binding residues include C405, C408, C423, and C428. The 84-residue stretch at 588 to 671 (AADNFFKGKT…SKIEEKDTEK (84 aa)) folds into the BRCT domain.

The protein belongs to the NAD-dependent DNA ligase family. LigA subfamily. It depends on Mg(2+) as a cofactor. Requires Mn(2+) as cofactor.

The catalysed reaction is NAD(+) + (deoxyribonucleotide)n-3'-hydroxyl + 5'-phospho-(deoxyribonucleotide)m = (deoxyribonucleotide)n+m + AMP + beta-nicotinamide D-nucleotide.. Functionally, DNA ligase that catalyzes the formation of phosphodiester linkages between 5'-phosphoryl and 3'-hydroxyl groups in double-stranded DNA using NAD as a coenzyme and as the energy source for the reaction. It is essential for DNA replication and repair of damaged DNA. The protein is DNA ligase of Lactobacillus delbrueckii subsp. bulgaricus (strain ATCC 11842 / DSM 20081 / BCRC 10696 / JCM 1002 / NBRC 13953 / NCIMB 11778 / NCTC 12712 / WDCM 00102 / Lb 14).